Here is a 430-residue protein sequence, read N- to C-terminus: MAFEFRLPDIGEGIHEGEIVKWFVKAGDTIEEDDVLAEVQNDKSVVEIPSPVSGTVEEVMVEEGTVAVVGDVIVKIDAPDAEDMQFKGHDDDSSSKEEPAKEEAPAEQAPVATQTEEVDENRTVKAMPSVRKYAREKGVNIKAVSGSGKNGRITKEDVDAYLNGGAPTASNESAASATSEEVAETPAAPAAVTLEGDFPETTEKIPAMRRAIAKAMVNSKHTAPHVTLMDEIDVQALWDHRKKFKEIAAEQGTKLTFLPYVVKALVSALKKYPALNTSFNEEAGEIVHKHYWNIGIAADTDRGLLVPVVKHADRKSIFQISDEINELAVKARDGKLTADEMKGATCTISNIGSAGGQWFTPVINHPEVAILGIGRIAQKPIVKDGEIVAAPVLALSLSFDHRQIDGATGQNAMNHIKRLLNNPELLLMEG.

The Lipoyl-binding domain occupies 2–77 (AFEFRLPDIG…VVGDVIVKID (76 aa)). N6-lipoyllysine is present on lysine 43. The tract at residues 80-122 (DAEDMQFKGHDDDSSSKEEPAKEEAPAEQAPVATQTEEVDENR) is disordered. Over residues 84 to 104 (MQFKGHDDDSSSKEEPAKEEA) the composition is skewed to basic and acidic residues. In terms of domain architecture, Peripheral subunit-binding (PSBD) spans 125–162 (KAMPSVRKYAREKGVNIKAVSGSGKNGRITKEDVDAYL). A disordered region spans residues 165 to 200 (GAPTASNESAASATSEEVAETPAAPAAVTLEGDFPE). The span at 166-193 (APTASNESAASATSEEVAETPAAPAAVT) shows a compositional bias: low complexity. Histidine 401 is an active-site residue.

It belongs to the 2-oxoacid dehydrogenase family. In terms of assembly, forms a 24-polypeptide structural core with octahedral symmetry. (R)-lipoate is required as a cofactor.

The catalysed reaction is N(6)-[(R)-dihydrolipoyl]-L-lysyl-[protein] + acetyl-CoA = N(6)-[(R)-S(8)-acetyldihydrolipoyl]-L-lysyl-[protein] + CoA. The pyruvate dehydrogenase complex catalyzes the overall conversion of pyruvate to acetyl-CoA and CO(2). It contains multiple copies of three enzymatic components: pyruvate dehydrogenase (E1), dihydrolipoamide acetyltransferase (E2) and lipoamide dehydrogenase (E3). This chain is Dihydrolipoyllysine-residue acetyltransferase component of pyruvate dehydrogenase complex (pdhC), found in Staphylococcus aureus (strain COL).